We begin with the raw amino-acid sequence, 63 residues long: Large ribosomal subunit protein uL29 (63 aa).

The protein belongs to the universal ribosomal protein uL29 family.

This is Large ribosomal subunit protein uL29 from Christiangramia forsetii (strain DSM 17595 / CGMCC 1.15422 / KT0803) (Gramella forsetii).